The primary structure comprises 20 residues: Alpha-1B-glycoprotein (20 aa).

A disordered region spans residues 1–20; sequence AVVFDPQPALWAEADTQLEP.

As to quaternary structure, interacts with CRISP3. Glycosylated. As to expression, plasma.

It is found in the secreted. This is Alpha-1B-glycoprotein (A1BG) from Equus asinus (Donkey).